The sequence spans 1022 residues: Antigenic heat-stable 120 kDa protein (1022 aa).

The segment at 1–33 (MSKNGNQDISEFDPLNREFTEAEKQQQMQQEQE) is disordered. Basic and acidic residues predominate over residues 14-24 (PLNREFTEAEK).

The protein localises to the cytoplasm. This Rickettsia prowazekii (strain Madrid E) protein is Antigenic heat-stable 120 kDa protein (sca4).